The chain runs to 206 residues: Small ribosomal subunit protein uS4 (206 aa).

The region spanning 98 to 163 (MRLDNVVYRL…SEKFKTFVEN (66 aa)) is the S4 RNA-binding domain.

The protein belongs to the universal ribosomal protein uS4 family. As to quaternary structure, part of the 30S ribosomal subunit. Contacts protein S5. The interaction surface between S4 and S5 is involved in control of translational fidelity.

Functionally, one of the primary rRNA binding proteins, it binds directly to 16S rRNA where it nucleates assembly of the body of the 30S subunit. Its function is as follows. With S5 and S12 plays an important role in translational accuracy. The polypeptide is Small ribosomal subunit protein uS4 (Clostridium botulinum (strain Alaska E43 / Type E3)).